Consider the following 227-residue polypeptide: Aspartyl protease inhibitor (227 aa).

A signal peptide spans 1 to 15 (MKLVVLCVLCGIALA). Residues 88 to 109 (SLKSRMAGKKEKAVTPKEEDLP) are compositionally biased toward basic and acidic residues. Residues 88–116 (SLKSRMAGKKEKAVTPKEEDLPKAPQKPS) are disordered. C131 and C223 are disulfide-bonded.

Belongs to the protease inhibitor I33 family.

It is found in the secreted. Aspartyl protease inhibitor. This is Aspartyl protease inhibitor (API) from Ostertagia ostertagi (Brown stomach worm).